A 143-amino-acid polypeptide reads, in one-letter code: MKTFSAKPHEVKREWFVIDAQDKVLGRVAAEVASRLRGKHKPEYTPHVDTGDYIIVINADKLRVTGAKFEDKKYFRHSGFPGGIYERTFREMQEQFPGRALEQAVKGMLPKGPLGYAMIKKLKVYAGAEHAHAAQQPKVLELK.

Belongs to the universal ribosomal protein uL13 family. As to quaternary structure, part of the 50S ribosomal subunit.

In terms of biological role, this protein is one of the early assembly proteins of the 50S ribosomal subunit, although it is not seen to bind rRNA by itself. It is important during the early stages of 50S assembly. The polypeptide is Large ribosomal subunit protein uL13 (Neisseria meningitidis serogroup C (strain 053442)).